A 97-amino-acid chain; its full sequence is YcgL domain-containing protein PA14_47450 (97 aa).

One can recognise a YcgL domain in the interval 3 to 87; the sequence is RICSVYKSPR…GEEEYIEHLP (85 aa).

The chain is YcgL domain-containing protein PA14_47450 from Pseudomonas aeruginosa (strain UCBPP-PA14).